Here is a 634-residue protein sequence, read N- to C-terminus: MAPKKKIVKKNKGDINEMTIIVEDSPLNKLNALNGLLEGGNGLSCISSELTDASYGPNLLEGLSKMRQENFLCDLVIGTKTKSFDVHKSVMASCSEYFYNILKKDPSIQRVDLNDISPLGLATVIAYAYTGKLTLSLYTIGSIISAAVYLQIHTLVKMCSDFLIREMSVENCMYVVNIAETYSLKNAKAAAQKFIRDNFLEFAESDQFMKLTFEQINELLIDDDLQLPSEIVAFQIAMKWLEFDQKRVKYAADLLSNIRFGTISAQDLVNYVQSVPRMMQDADCHRLLVDAMNYHLLPYHQNTLQSRRTRIRGGCRVLVTVGGRPGLTEKSLSRDILYRDPENGWSKLTEMPAKSFNQCVAVMDGFLYVAGGEDQNDARNQAKHAVSNFCRYDPRFNTWIHLASMNQKRTHFSLSVFNGLVYAAGGRNAEGSLASLECYVPSTNQWQPKTPLEVARCCHASAVADGRVLVTGGYIANAYSRSVCAYDPASDSWQELPNLSTPRGWHCAVTLSDRVYVMGGSQLGPRGERVDVLTVECYSPATGQWSYAAPLQVGVSTAGVSALHGRAYLVGGWNEGEKKYKKCIQCFSPELNEWTEDDELPEATVGVSCCTLSMPNNVTRESRASSVSSVPVSI.

The residue at position 2 (alanine 2) is a N,N,N-trimethylalanine. The region spanning 73–137 is the BTB domain; that stretch reads CDLVIGTKTK…AYTGKLTLSL (65 aa). In terms of domain architecture, BACK spans 172–273; it reads CMYVVNIAET…SAQDLVNYVQ (102 aa). Kelch repeat units lie at residues 317-365, 366-419, 420-466, 468-513, 515-565, and 567-614; these read VLVT…VMDG, FLYV…VFNG, LVYA…VADG, VLVT…TLSD, VYVM…ALHG, and AYLV…TLSM.

In terms of processing, N-terminus is methylated by METTL11A/NTM1. As to expression, strongly expressed in skeletal muscle and weakly in heart. According to PubMed:15302408, not expressed in other tissues. According to PubMed:18719355, abundantly expressed in both embryonic skeletal and heart tissues.

In terms of biological role, transcriptional repressor in MAPK/JNK signaling pathway to regulate cellular functions. Overexpression inhibits the transcriptional activities of both the TPA-response element (TRE) and serum response element (SRE). The chain is Kelch-like protein 31 (KLHL31) from Homo sapiens (Human).